Here is a 122-residue protein sequence, read N- to C-terminus: Small ribosomal subunit protein uS13 (122 aa).

A disordered region spans residues 93–122; that stretch reads RRGLPVRGQRTKTNARTRKGPKKTIAGKKK.

The protein belongs to the universal ribosomal protein uS13 family. Part of the 30S ribosomal subunit. Forms a loose heterodimer with protein S19. Forms two bridges to the 50S subunit in the 70S ribosome.

Functionally, located at the top of the head of the 30S subunit, it contacts several helices of the 16S rRNA. In the 70S ribosome it contacts the 23S rRNA (bridge B1a) and protein L5 of the 50S subunit (bridge B1b), connecting the 2 subunits; these bridges are implicated in subunit movement. Contacts the tRNAs in the A and P-sites. The polypeptide is Small ribosomal subunit protein uS13 (Corynebacterium jeikeium (strain K411)).